The chain runs to 336 residues: Melanoma-associated antigen B17 (336 aa).

Positions 1-17 (MPRGQASKRRAREKRRQ) are enriched in basic residues. Residues 1–108 (MPRGQASKRR…SSSESTGRDL (108 aa)) are disordered. Low complexity-rich tracts occupy residues 39-54 (PSSSSPACQSPPQSFP) and 62-80 (SQRASYPSSPASAVSLTSS). Positions 90–103 (ESPNSFHGPSSSES) are enriched in polar residues. In terms of domain architecture, MAGE spans 109 to 336 (LNTKTGELVQ…RARASRSFQP (228 aa)).

The protein is Melanoma-associated antigen B17 (MAGEB17) of Homo sapiens (Human).